Consider the following 271-residue polypeptide: Shikimate dehydrogenase (NADP(+)) (271 aa).

Shikimate-binding positions include 14–16 (SLS) and Thr61. The Proton acceptor role is filled by Lys65. Shikimate is bound by residues Asn86 and Asp101. NADP(+) contacts are provided by residues 125–129 (GAGGA) and Ile212. Tyr214 provides a ligand contact to shikimate. Gly235 contributes to the NADP(+) binding site.

This sequence belongs to the shikimate dehydrogenase family. In terms of assembly, homodimer.

The catalysed reaction is shikimate + NADP(+) = 3-dehydroshikimate + NADPH + H(+). It participates in metabolic intermediate biosynthesis; chorismate biosynthesis; chorismate from D-erythrose 4-phosphate and phosphoenolpyruvate: step 4/7. Involved in the biosynthesis of the chorismate, which leads to the biosynthesis of aromatic amino acids. Catalyzes the reversible NADPH linked reduction of 3-dehydroshikimate (DHSA) to yield shikimate (SA). This chain is Shikimate dehydrogenase (NADP(+)), found in Clostridium perfringens (strain 13 / Type A).